A 276-amino-acid polypeptide reads, in one-letter code: Small ribosomal subunit protein uS2 (276 aa).

A disordered region spans residues 254-276 (LAGATAAAPAEGAVATETTPTEG). Residues 255–276 (AGATAAAPAEGAVATETTPTEG) are compositionally biased toward low complexity.

The protein belongs to the universal ribosomal protein uS2 family.

The protein is Small ribosomal subunit protein uS2 of Mycobacterium ulcerans (strain Agy99).